The sequence spans 215 residues: DNA repair and recombination protein RadB (215 aa).

This sequence belongs to the eukaryotic RecA-like protein family. RadB subfamily.

Involved in DNA repair and in homologous recombination. May regulate the cleavage reactions of the branch-structured DNA. Has a very weak ATPase activity that is not stimulated by DNA. Binds DNA but does not promote DNA strands exchange. The chain is DNA repair and recombination protein RadB from Methanococcus maripaludis (strain C7 / ATCC BAA-1331).